We begin with the raw amino-acid sequence, 41 residues long: MKIKNSLKALRERHRNNRLVRRKGRVYILNKTNPRFRARQG.

The protein belongs to the bacterial ribosomal protein bL36 family.

The polypeptide is Large ribosomal subunit protein bL36 (Bartonella henselae (strain ATCC 49882 / DSM 28221 / CCUG 30454 / Houston 1) (Rochalimaea henselae)).